We begin with the raw amino-acid sequence, 429 residues long: Adenylosuccinate synthetase (429 aa).

GTP is bound by residues Gly12 to Lys18 and Gly40 to Thr42. Asp13 functions as the Proton acceptor in the catalytic mechanism. Asp13 and Gly40 together coordinate Mg(2+). IMP-binding positions include Asp13 to Lys16, Asn38 to His41, Thr128, Arg142, Gln223, Thr238, and Arg302. The active-site Proton donor is the His41. Residue Thr298–Arg304 participates in substrate binding. Residues Arg304, Leu330 to Asp332, and Ser412 to Gly414 contribute to the GTP site.

Belongs to the adenylosuccinate synthetase family. Homodimer. Requires Mg(2+) as cofactor.

It localises to the cytoplasm. It catalyses the reaction IMP + L-aspartate + GTP = N(6)-(1,2-dicarboxyethyl)-AMP + GDP + phosphate + 2 H(+). It functions in the pathway purine metabolism; AMP biosynthesis via de novo pathway; AMP from IMP: step 1/2. In terms of biological role, plays an important role in the de novo pathway of purine nucleotide biosynthesis. Catalyzes the first committed step in the biosynthesis of AMP from IMP. This chain is Adenylosuccinate synthetase, found in Lactobacillus johnsonii (strain CNCM I-12250 / La1 / NCC 533).